The chain runs to 617 residues: Phosphomethylpyrimidine synthase (617 aa).

Substrate-binding positions include asparagine 230, methionine 259, tyrosine 288, histidine 324, 344–346 (SRG), 385–388 (DGLR), and glutamate 424. Histidine 428 serves as a coordination point for Zn(2+). Tyrosine 451 is a substrate binding site. Histidine 492 provides a ligand contact to Zn(2+). Cysteine 572, cysteine 575, and cysteine 580 together coordinate [4Fe-4S] cluster.

The protein belongs to the ThiC family. In terms of assembly, homodimer. The cofactor is [4Fe-4S] cluster.

The catalysed reaction is 5-amino-1-(5-phospho-beta-D-ribosyl)imidazole + S-adenosyl-L-methionine = 4-amino-2-methyl-5-(phosphooxymethyl)pyrimidine + CO + 5'-deoxyadenosine + formate + L-methionine + 3 H(+). The protein operates within cofactor biosynthesis; thiamine diphosphate biosynthesis. In terms of biological role, catalyzes the synthesis of the hydroxymethylpyrimidine phosphate (HMP-P) moiety of thiamine from aminoimidazole ribotide (AIR) in a radical S-adenosyl-L-methionine (SAM)-dependent reaction. This is Phosphomethylpyrimidine synthase from Paracidovorax citrulli (strain AAC00-1) (Acidovorax citrulli).